We begin with the raw amino-acid sequence, 209 residues long: MNDPSCSSADETAHPGRLVIISGPSGAGKSTVVKQLMKRCDVPLQLSVSATTREPRPGEIHGQDYFFLSHEEFERRRKLNDFVECKQVFSMGQWYGTLKDQVATGLNAGKWVILEIDVQGAMAVLDDPHYRPVTIFVHPGSMEELERRLRNRGTESESSLTARLETAAAEMQCLSRYQYEIINESVDNAVTEICQILLDQRKTTPCSKN.

In terms of domain architecture, Guanylate kinase-like spans 16-198 (GRLVIISGPS…AVTEICQILL (183 aa)). 23 to 30 (GPSGAGKS) contacts ATP.

It belongs to the guanylate kinase family.

It is found in the cytoplasm. The enzyme catalyses GMP + ATP = GDP + ADP. Essential for recycling GMP and indirectly, cGMP. The chain is Guanylate kinase from Rhodopirellula baltica (strain DSM 10527 / NCIMB 13988 / SH1).